The chain runs to 39 residues: Natriuretic peptide TcNPa (39 aa).

A propeptide spanning residues 1-8 (SGSETAKI) is cleaved from the precursor. Cys12 and Cys28 form a disulfide bridge. Thr35 carries O-linked (GalNAc...) threonine glycosylation.

This sequence belongs to the natriuretic peptide family. O-linked glycans consist of galactosyl-beta(1-3)-N-acetylgalactosamine (Gal-GalNAc). In terms of processing, the synthetic non-glycosylated form shows higher potency on natriuretic receptors (EC(50)=672.90 nM) and NPR2 (EC(50)=261.0 nM). Expressed by the venom gland.

The protein resides in the secreted. In terms of biological role, snake venom natriuretic peptide that targets both NPR1 (EC(50)=1080.0 nM) and NPR2 (EC(50)=328.60 nM). Exhibits hypotensive and vasodepressor activities. This is Natriuretic peptide TcNPa from Tropidechis carinatus (Australian rough-scaled snake).